A 490-amino-acid polypeptide reads, in one-letter code: Argininosuccinate lyase (490 aa).

2 disordered regions span residues Asp426–Ala452 and Ala469–Glu490. A compositionally biased stretch (low complexity) spans Pro440–Ala452. The span at Ala469–Val480 shows a compositional bias: basic and acidic residues.

It belongs to the lyase 1 family. Argininosuccinate lyase subfamily.

It localises to the cytoplasm. It carries out the reaction 2-(N(omega)-L-arginino)succinate = fumarate + L-arginine. Its pathway is amino-acid biosynthesis; L-arginine biosynthesis; L-arginine from L-ornithine and carbamoyl phosphate: step 3/3. This is Argininosuccinate lyase from Natronomonas pharaonis (strain ATCC 35678 / DSM 2160 / CIP 103997 / JCM 8858 / NBRC 14720 / NCIMB 2260 / Gabara) (Halobacterium pharaonis).